The primary structure comprises 157 residues: Putative pre-16S rRNA nuclease (157 aa).

Belongs to the YqgF nuclease family.

Its subcellular location is the cytoplasm. In terms of biological role, could be a nuclease involved in processing of the 5'-end of pre-16S rRNA. This is Putative pre-16S rRNA nuclease from Parasynechococcus marenigrum (strain WH8102).